The following is a 95-amino-acid chain: UPF0235 protein Pcar_0617 (95 aa).

The protein belongs to the UPF0235 family.

The sequence is that of UPF0235 protein Pcar_0617 from Syntrophotalea carbinolica (strain DSM 2380 / NBRC 103641 / GraBd1) (Pelobacter carbinolicus).